A 403-amino-acid chain; its full sequence is MEILDGKIELPKGFVASGVFAGIKRSKKDLALIYSERLANISAVFTTNRVKAAPVILDMERAKKGKAQAIVINSGNANACTGEKGIEDAKSMAKKVAEVLEIEEEDVLVCSTGVIGVPLPMEKVLKGIEVAALSLSKEGGYDAAHAIMTTDTFLKAVTVKFNVEGKDITMTGFAKGSGMIHPNMATMLSFVLTDASVEKATLDKAFKNTVNRTYNMISVDGDMSTNDTAIVMANGMAENKAIQEGTYEFDLFYKALEYVNKTLARLIAKDGEGATKLIEVNVINAKTENDARLAAKAIVNSNLVKTAIFGEDANWGRILAAVGYSGADFDVDKVDIYLKSAKGEVKVCENGSFFAFDESLAKEVLKEKEIFIIVDMKAGEFMATSWGCDLSYDYVKINGSYRT.

Substrate contacts are provided by threonine 149, lysine 175, threonine 186, glutamate 272, asparagine 398, and threonine 403. Residue threonine 186 is the Nucleophile of the active site.

It belongs to the ArgJ family. As to quaternary structure, heterotetramer of two alpha and two beta chains.

Its subcellular location is the cytoplasm. The enzyme catalyses N(2)-acetyl-L-ornithine + L-glutamate = N-acetyl-L-glutamate + L-ornithine. It catalyses the reaction L-glutamate + acetyl-CoA = N-acetyl-L-glutamate + CoA + H(+). It participates in amino-acid biosynthesis; L-arginine biosynthesis; L-ornithine and N-acetyl-L-glutamate from L-glutamate and N(2)-acetyl-L-ornithine (cyclic): step 1/1. It functions in the pathway amino-acid biosynthesis; L-arginine biosynthesis; N(2)-acetyl-L-ornithine from L-glutamate: step 1/4. Functionally, catalyzes two activities which are involved in the cyclic version of arginine biosynthesis: the synthesis of N-acetylglutamate from glutamate and acetyl-CoA as the acetyl donor, and of ornithine by transacetylation between N(2)-acetylornithine and glutamate. This is Arginine biosynthesis bifunctional protein ArgJ from Caldanaerobacter subterraneus subsp. tengcongensis (strain DSM 15242 / JCM 11007 / NBRC 100824 / MB4) (Thermoanaerobacter tengcongensis).